The primary structure comprises 498 residues: MSDVVSVGFVPMSTSAKGLLVVFCDETLASGPDSRKALGTAVDAVKRAAETSRFKGKSGAALDILAPEGLKASRLVVIGIGKPADLKEHDFLKLGGTIASKLGSGKEAVTVIAELPAGPMSPAQAAALAAGVRLRAYKFDRYKTKKKDDDAPLDASVAIAVRDVAATKKAFAPQNGLVDGVNIARELVNEPPNVLYPAEFARRASQLSKLGVGIEVLDVPAMTKLKMGALLGVAQGSARPARTVIMRWNGGKKGAAPIAFVGKGVCFDTGGISIKPSASMEDMKGDMGGAACVVGLMHALAARKAKVNVIGAIGLVENMPDGNAQRPGDIVTSMSGQTIEIINTDAEGRLVLADVLWYVAKKHKPKFMVDLATLTGAIMVALGTEYAGLFSNNDELATRLNEVGLATGERVWRMPLGPEYDKQIDSQFADMKNTGSRNGGSITAAQFLQRFVDDTPWAHLDIAGTAMASPKSDINQSWGSGYGVRLLDRLVATHYESK.

Mn(2+) contacts are provided by K263 and D268. The active site involves K275. Mn(2+) is bound by residues D286, D345, and E347. R349 is an active-site residue.

Belongs to the peptidase M17 family. Mn(2+) serves as cofactor.

It localises to the cytoplasm. The enzyme catalyses Release of an N-terminal amino acid, Xaa-|-Yaa-, in which Xaa is preferably Leu, but may be other amino acids including Pro although not Arg or Lys, and Yaa may be Pro. Amino acid amides and methyl esters are also readily hydrolyzed, but rates on arylamides are exceedingly low.. The catalysed reaction is Release of an N-terminal amino acid, preferentially leucine, but not glutamic or aspartic acids.. In terms of biological role, presumably involved in the processing and regular turnover of intracellular proteins. Catalyzes the removal of unsubstituted N-terminal amino acids from various peptides. The protein is Probable cytosol aminopeptidase of Rhodopseudomonas palustris (strain BisA53).